The following is a 102-amino-acid chain: NADH-quinone oxidoreductase subunit K (102 aa).

3 helical membrane passes run 5 to 25 (ALTG…FGVL), 30 to 50 (ILFQ…AFIA), and 63 to 83 (MFVL…ALFL).

This sequence belongs to the complex I subunit 4L family. NDH-1 is composed of 14 different subunits. Subunits NuoA, H, J, K, L, M, N constitute the membrane sector of the complex.

It is found in the cell inner membrane. It catalyses the reaction a quinone + NADH + 5 H(+)(in) = a quinol + NAD(+) + 4 H(+)(out). Functionally, NDH-1 shuttles electrons from NADH, via FMN and iron-sulfur (Fe-S) centers, to quinones in the respiratory chain. The immediate electron acceptor for the enzyme in this species is believed to be ubiquinone. Couples the redox reaction to proton translocation (for every two electrons transferred, four hydrogen ions are translocated across the cytoplasmic membrane), and thus conserves the redox energy in a proton gradient. The chain is NADH-quinone oxidoreductase subunit K from Rhodopseudomonas palustris (strain BisB18).